Here is a 423-residue protein sequence, read N- to C-terminus: Histidine--tRNA ligase (423 aa).

This sequence belongs to the class-II aminoacyl-tRNA synthetase family. As to quaternary structure, homodimer.

It is found in the cytoplasm. The enzyme catalyses tRNA(His) + L-histidine + ATP = L-histidyl-tRNA(His) + AMP + diphosphate + H(+). This is Histidine--tRNA ligase from Anoxybacillus flavithermus (strain DSM 21510 / WK1).